A 303-amino-acid polypeptide reads, in one-letter code: Protease HtpX homolog (303 aa).

2 consecutive transmembrane segments (helical) span residues 19 to 39 (IIIF…VSYF) and 41 to 61 (LGEF…YYAY). His-146 lines the Zn(2+) pocket. Residue Glu-147 is part of the active site. A Zn(2+)-binding site is contributed by His-150. 2 helical membrane-spanning segments follow: residues 156 to 176 (VRLQ…GDSL) and 192 to 212 (NILG…ATLL). Glu-221 contacts Zn(2+).

Belongs to the peptidase M48B family. Zn(2+) is required as a cofactor.

Its subcellular location is the cell inner membrane. This Dictyoglomus thermophilum (strain ATCC 35947 / DSM 3960 / H-6-12) protein is Protease HtpX homolog.